The chain runs to 412 residues: NADH-ubiquinone oxidoreductase 49 kDa subunit (412 aa).

This sequence belongs to the complex I 49 kDa subunit family.

It is found in the hydrogenosome. It carries out the reaction a ubiquinone + NADH + 5 H(+)(in) = a ubiquinol + NAD(+) + 4 H(+)(out). Its function is as follows. Transfer of electrons from NADH to the respiratory chain. The immediate electron acceptor for the enzyme is believed to be ubiquinone. Component of the iron-sulfur (IP) fragment of the enzyme. This chain is NADH-ubiquinone oxidoreductase 49 kDa subunit (nad7), found in Nyctotherus ovalis.